The sequence spans 440 residues: O-glycoside alpha-1,2-mannosyltransferase homolog 4 (440 aa).

Topologically, residues 1–35 are cytoplasmic; sequence MLGWNKHVFFSESRINFRCLLRKKLKKRCPLSARF. A helical; Signal-anchor for type II membrane protein membrane pass occupies residues 36–56; that stretch reads VLVLLLIVLIFILKMGYKQLI. Residues 57–440 are Lumenal-facing; the sequence is YKLNHPPLRR…NLIGDGFLDE (384 aa). The active-site Nucleophile is the E336.

The protein belongs to the glycosyltransferase 15 family.

The protein localises to the cytoplasm. It is found in the nucleus. The protein resides in the golgi apparatus membrane. In terms of biological role, probable mannosyltransferase involved in O-glycosylation of cell wall and secreted proteins. Transfers an alpha-D-mannosyl residue from GDP-mannose into lipid-linked oligosaccharide, forming an alpha-(1-&gt;2)-D-mannosyl-D-mannose linkage. In Schizosaccharomyces pombe (strain 972 / ATCC 24843) (Fission yeast), this protein is O-glycoside alpha-1,2-mannosyltransferase homolog 4 (omh4).